The chain runs to 104 residues: MDSRMKVLKLFKTLHRTRQCVFQNDCRALEAARRRINEEFKKNKSECSPAKISELLKFGTDVEIVLRTSVVQGIHTDSNKLVLQARKDLLLDNIPFCDAPEKQT.

Belongs to the complex I LYR family. As to quaternary structure, interacts with UQCRFS1.

The protein resides in the mitochondrion matrix. Functionally, assembly factor required for Rieske Fe-S protein UQCRFS1 incorporation into the cytochrome b-c1 (CIII) complex. Functions as a chaperone, binding to this subunit within the mitochondrial matrix and stabilizing it prior to its translocation and insertion into the late CIII dimeric intermediate within the mitochondrial inner membrane. The chain is Complex III assembly factor LYRM7 (lyrm7) from Xenopus tropicalis (Western clawed frog).